The sequence spans 146 residues: Small ribosomal subunit protein bS6 (146 aa).

Positions 94 to 146 are disordered; it reads GPITTPSPMMQEGKSRPPHSSDEDSENTAPAKAKTADSPGEDTRTTEESDPKP. Basic and acidic residues-rich tracts occupy residues 106–115 and 134–146; these read GKSRPPHSSD and EDTR…DPKP.

It belongs to the bacterial ribosomal protein bS6 family.

Its function is as follows. Binds together with bS18 to 16S ribosomal RNA. The chain is Small ribosomal subunit protein bS6 from Nitrosomonas europaea (strain ATCC 19718 / CIP 103999 / KCTC 2705 / NBRC 14298).